Here is an 89-residue protein sequence, read N- to C-terminus: Small ribosomal subunit protein uS14 (89 aa).

It belongs to the universal ribosomal protein uS14 family. As to quaternary structure, part of the 30S ribosomal subunit. Contacts proteins S3 and S10.

Its function is as follows. Binds 16S rRNA, required for the assembly of 30S particles and may also be responsible for determining the conformation of the 16S rRNA at the A site. In Akkermansia muciniphila (strain ATCC BAA-835 / DSM 22959 / JCM 33894 / BCRC 81048 / CCUG 64013 / CIP 107961 / Muc), this protein is Small ribosomal subunit protein uS14.